Here is a 311-residue protein sequence, read N- to C-terminus: MYKQGEPNLWTGRLDSETDPKKFRHFQTVTFEDLSKLEKSSTPSGVGILGYAVDKGVALNKGRIGAKEGPDAIKQAFAGLPDLNQCETLVDYGNVYHDHEELIDTQKEFATLAAKSIVNHRQTFLLGGGHDIAYAQYLATRKVYPTQSIGVINIDAHFDTRAEQQSTSGTSFRQILEEDENTGYLVLGIAQGGNTQSLFDYAKEKKIDYVFADELLSHVSPTIKDMIERFIHEHDVIMFTICMDVIDSAFAPGVSAPAVLGLYPHTVLELAKRIIPSDKVSSVSIAEMNPTYDADNRTAKLVANLVHHFLK.

Mn(2+)-binding residues include His-130, Asp-155, His-157, Asp-159, Cys-242, and Asp-244.

It belongs to the arginase family. Mn(2+) is required as a cofactor.

It carries out the reaction N-formimidoyl-L-glutamate + H2O = formamide + L-glutamate. It functions in the pathway amino-acid degradation; L-histidine degradation into L-glutamate; L-glutamate from N-formimidoyl-L-glutamate (hydrolase route): step 1/1. Its function is as follows. Catalyzes the conversion of N-formimidoyl-L-glutamate to L-glutamate and formamide. The protein is Formimidoylglutamase of Staphylococcus aureus (strain MRSA252).